We begin with the raw amino-acid sequence, 488 residues long: Probable metabolite transport protein YBR241C (488 aa).

At 1–18 the chain is on the cytoplasmic side; it reads MAETERLMPNGGSRETKP. Residues 19 to 39 traverse the membrane as a helical segment; it reads LITGHLILGTIVACLGSIQYG. Over 40–87 the chain is Vacuolar; it reads YHIAELNAPQEFLSCSRFEAPDENISYDDTWVGQHGLKQCIALTDSQY. A glycan (N-linked (GlcNAc...) asparagine) is linked at Asn63. Residues 88–108 traverse the membrane as a helical segment; it reads GAITSIFSIGGLFGSYYAGNW. Residues 109 to 121 lie on the Cytoplasmic side of the membrane; the sequence is ANRYGRKYVSMGA. A helical membrane pass occupies residues 122–142; sequence SAMCMVSSLLLFFSNSYLQLL. The Vacuolar portion of the chain corresponds to 143 to 146; sequence FGRF. Residues 147-167 traverse the membrane as a helical segment; it reads LVGMSCGTAIVITPLFINEIA. Topologically, residues 168–178 are cytoplasmic; the sequence is PVEWRGAMGSM. Residues 179–198 traverse the membrane as a helical segment; the sequence is NQVSINLGILLTQTLALKYA. At 199–204 the chain is on the vacuolar side; it reads DSYNWR. A helical membrane pass occupies residues 205-225; the sequence is WLLFSGSVIAVANILAWLKVD. The Cytoplasmic portion of the chain corresponds to 226 to 299; it reads ESPRWLVSHG…DPSYKKPRTV (74 aa). Residues 258 to 279 show a composition bias toward basic and acidic residues; the sequence is EIQDWQRSHGHNRDPESSEETH. Residues 258–281 are disordered; sequence EIQDWQRSHGHNRDPESSEETHSG. A helical membrane pass occupies residues 300–320; the sequence is ILAILSCQQFCGINSIIFYGV. The Vacuolar portion of the chain corresponds to 321–322; sequence KV. The chain crosses the membrane as a helical span at residues 323–337; it reads IGKILPDYSIQVNFA. Residues 338-344 lie on the Cytoplasmic side of the membrane; the sequence is ISILNVV. A helical membrane pass occupies residues 345–364; that stretch reads VTLAASAIIDHVGRRPLLLA. The Vacuolar segment spans residues 365–390; that stretch reads STTVMTAMSLLISVGLTLSVSFLLVT. The chain crosses the membrane as a helical span at residues 391–411; sequence ATFVYIAAFAIGLGPIPFLII. Residues 412–419 are Cytoplasmic-facing; sequence GELSYPQD. The helical transmembrane segment at 420–442 threads the bilayer; it reads AATAQSFGTVCNWLATFIVGYLF. Residues 443-446 are Vacuolar-facing; sequence PIGH. A helical membrane pass occupies residues 447–463; it reads GLMGGYVFAIFAAIAAM. The Cytoplasmic portion of the chain corresponds to 464–488; the sequence is FATYVYKRVPETKGKTTYSEVWAGY.

Belongs to the major facilitator superfamily. Sugar transporter (TC 2.A.1.1) family.

Its subcellular location is the vacuole membrane. This Saccharomyces cerevisiae (strain ATCC 204508 / S288c) (Baker's yeast) protein is Probable metabolite transport protein YBR241C.